Consider the following 401-residue polypeptide: Renin-2 (401 aa).

Positions 1 to 25 are cleaved as a signal peptide; sequence MDRRRMPLWALLLLWSPCTFSLPTG. The propeptide at 26-63 is activation peptide; it reads TTFERIPLKKMPSVREILEERGVDMTRLSAEWDVFTKR. The 316-residue stretch at 83-398 folds into the Peptidase A1 domain; the sequence is YYGEIGIGTP…DRHNNRIGFA (316 aa). D101 is a catalytic residue. Intrachain disulfides connect C114/C121 and C277/C281. The active site involves D286. A disulfide bridge connects residues C320 and C357.

This sequence belongs to the peptidase A1 family. Dimer of a heavy chain and a light chain joined by a disulfide bond. As to expression, submandibular gland.

The protein resides in the secreted. It carries out the reaction Cleavage of Leu-|-Xaa bond in angiotensinogen to generate angiotensin I.. Renin is a highly specific endopeptidase, related to pepsin, whose only known function is to generate angiotensin I from angiotensinogen in the plasma, initiating a cascade of reactions that produce an elevation of blood pressure and increased sodium retention by the kidney. In Mus musculus (Mouse), this protein is Renin-2.